We begin with the raw amino-acid sequence, 126 residues long: Glycine cleavage system H protein (126 aa).

The Lipoyl-binding domain maps to 24-106 (TVTVGITDHA…YGEGWMYRIK (83 aa)). K65 carries the post-translational modification N6-lipoyllysine.

It belongs to the GcvH family. The glycine cleavage system is composed of four proteins: P, T, L and H. It depends on (R)-lipoate as a cofactor.

In terms of biological role, the glycine cleavage system catalyzes the degradation of glycine. The H protein shuttles the methylamine group of glycine from the P protein to the T protein. The protein is Glycine cleavage system H protein of Psychrobacter sp. (strain PRwf-1).